Here is a 642-residue protein sequence, read N- to C-terminus: 1-deoxy-D-xylulose-5-phosphate synthase 2 (642 aa).

Residues H73 and 113–115 (SHA) contribute to the thiamine diphosphate site. D144 contacts Mg(2+). Thiamine diphosphate is bound by residues 145–146 (GA), N174, Y285, and E366. N174 is a binding site for Mg(2+).

It belongs to the transketolase family. DXPS subfamily. In terms of assembly, homodimer. Mg(2+) serves as cofactor. Requires thiamine diphosphate as cofactor.

The enzyme catalyses D-glyceraldehyde 3-phosphate + pyruvate + H(+) = 1-deoxy-D-xylulose 5-phosphate + CO2. It functions in the pathway metabolic intermediate biosynthesis; 1-deoxy-D-xylulose 5-phosphate biosynthesis; 1-deoxy-D-xylulose 5-phosphate from D-glyceraldehyde 3-phosphate and pyruvate: step 1/1. In terms of biological role, catalyzes the acyloin condensation reaction between C atoms 2 and 3 of pyruvate and glyceraldehyde 3-phosphate to yield 1-deoxy-D-xylulose-5-phosphate (DXP). The protein is 1-deoxy-D-xylulose-5-phosphate synthase 2 of Streptomyces coelicolor (strain ATCC BAA-471 / A3(2) / M145).